A 132-amino-acid chain; its full sequence is Small ribosomal subunit protein eS24 (132 aa).

A compositionally biased stretch (basic and acidic residues) spans Arg-90 to Lys-100. Residues Arg-90–Asp-132 are disordered. Over residues Lys-101 to Lys-121 the composition is skewed to basic residues.

The protein belongs to the eukaryotic ribosomal protein eS24 family. Component of the small ribosomal subunit.

Its subcellular location is the cytoplasm. Functionally, component of the small ribosomal subunit. The ribosome is a large ribonucleoprotein complex responsible for the synthesis of proteins in the cell. Required for processing of pre-rRNA and maturation of 40S ribosomal subunits. The polypeptide is Small ribosomal subunit protein eS24 (rps24) (Takifugu rubripes (Japanese pufferfish)).